Consider the following 200-residue polypeptide: dTTP/UTP pyrophosphatase (200 aa).

D81 functions as the Proton acceptor in the catalytic mechanism.

Belongs to the Maf family. YhdE subfamily. The cofactor is a divalent metal cation.

The protein resides in the cytoplasm. The enzyme catalyses dTTP + H2O = dTMP + diphosphate + H(+). The catalysed reaction is UTP + H2O = UMP + diphosphate + H(+). Functionally, nucleoside triphosphate pyrophosphatase that hydrolyzes dTTP and UTP. May have a dual role in cell division arrest and in preventing the incorporation of modified nucleotides into cellular nucleic acids. The chain is dTTP/UTP pyrophosphatase from Albidiferax ferrireducens (strain ATCC BAA-621 / DSM 15236 / T118) (Rhodoferax ferrireducens).